Consider the following 154-residue polypeptide: 3-hydroxyacyl-[acyl-carrier-protein] dehydratase FabZ (154 aa).

H55 is an active-site residue.

The protein belongs to the thioester dehydratase family. FabZ subfamily.

It localises to the cytoplasm. It carries out the reaction a (3R)-hydroxyacyl-[ACP] = a (2E)-enoyl-[ACP] + H2O. Its function is as follows. Involved in unsaturated fatty acids biosynthesis. Catalyzes the dehydration of short chain beta-hydroxyacyl-ACPs and long chain saturated and unsaturated beta-hydroxyacyl-ACPs. This Nitratidesulfovibrio vulgaris (strain DSM 19637 / Miyazaki F) (Desulfovibrio vulgaris) protein is 3-hydroxyacyl-[acyl-carrier-protein] dehydratase FabZ.